A 414-amino-acid polypeptide reads, in one-letter code: 11-beta-hydroxysteroid dehydrogenase type 2 (414 aa).

4 helical membrane-spanning segments follow: residues 3 to 23 (DFAV…GGAV), 26 to 46 (FLAF…ATLL), 52 to 72 (ALCM…WLYF), and 341 to 361 (YYAG…PLSI). Residues 382-414 (KQQGLSPNDNNNSIKENMNDSSSNNSNFTKCID) are disordered. A compositionally biased stretch (polar residues) spans 384–397 (QGLSPNDNNNSIKE).

It belongs to the short-chain dehydrogenases/reductases (SDR) family. In terms of tissue distribution, broadly expressed in peripheral (brain, gill, eye, heart, liver, head kidney, posterior kidney, and gut).

Its subcellular location is the membrane. It catalyses the reaction an 11beta-hydroxysteroid + NAD(+) = an 11-oxosteroid + NADH + H(+). The enzyme catalyses cortisol + NAD(+) = cortisone + NADH + H(+). It carries out the reaction corticosterone + NAD(+) = 11-dehydrocorticosterone + NADH + H(+). The catalysed reaction is 11beta,17beta-dihydroxyandrost-4-ene-3-one + NAD(+) = 17beta-hydroxyandrost-4-ene-3,11-dione + NADH + H(+). It catalyses the reaction 11beta-hydroxyandrost-4-ene-3,17-dione + NAD(+) = androst-4-ene-3,11,17-trione + NADH + H(+). Its pathway is steroid metabolism. In terms of biological role, catalyzes the conversion of biologically active 11beta-hydroxyglucocorticoids (11beta-hydroxysteroid) such as cortisol, to inactive 11-ketoglucocorticoids (11-oxosteroid) such as cortisone, in the presence of NAD(+). Cortisol is the primary glucocorticoid in teleosts and is released to increase glucose bioavailability in order to meet the increased energy demands in response to stress. Functions as a dehydrogenase (oxidase), thereby decreasing the concentration of active glucocorticoids, regulating the hypothalamus-pituitary-interrenal (HPI) axis function in adult fish. Decreasing the excess glucocorticoids may be of relevance to brain function and neural proliferation. Plays a key role by catalyzing the oxidation of 11beta-hydroxytestosterone (11beta,17beta-dihydroxyandrost-4-ene-3-one) to 11-ketotestosterone (17beta-hydroxyandrost-4-ene-3,11-dione), the major fish androgen, that activates androgen receptor transcriptional activity. Catalyzes the conversion of 11beta-hydroxyandrostenedione (11beta-hydroxyandrost-4-ene-3,17-dione) to 11-ketoandrostenedione (androst-4-ene-3,11,17-trione), which can be further metabolized to 11-ketotestosterone. Exerts a dual role in fish by inactivating glucocorticoids and activating androgens. This Danio rerio (Zebrafish) protein is 11-beta-hydroxysteroid dehydrogenase type 2 (hsd11b2).